We begin with the raw amino-acid sequence, 1010 residues long: Trifunctional purine biosynthetic protein adenosine-3 (1010 aa).

Alanine 2 carries the post-translational modification N-acetylalanine. A Phosphoserine modification is found at serine 10. The 208-residue stretch at 111 to 318 (KEFMDRHEIP…LYEVMQSTLD (208 aa)) folds into the ATP-grasp domain. ATP contacts are provided by residues 190–193 (EEFL), glutamate 197, arginine 220, and asparagine 229. 2 residues coordinate Mg(2+): glutamate 288 and asparagine 290. Lysine 350 is modified (N6-acetyllysine). Residues 434–809 (GLTYKDSGVD…NFPVQQKKAR (376 aa)) form an AIRS domain region. A phosphoserine mark is found at serine 440 and serine 467. Threonine 682 is modified (phosphothreonine). The GART domain stretch occupies residues 810-1010 (VAVLISGTGS…DGKIHWAKEQ (201 aa)). N(1)-(5-phospho-beta-D-ribosyl)glycinamide is bound at residue 818–820 (GSN). Residues arginine 871, 896 to 899 (MRIL), and asparagine 913 each bind (6R)-10-formyltetrahydrofolate. Residue histidine 915 is the Proton donor of the active site. 947–951 (AEDVD) serves as a coordination point for (6R)-10-formyltetrahydrofolate. 977–980 (KVAE) is a N(1)-(5-phospho-beta-D-ribosyl)glycinamide binding site.

It in the N-terminal section; belongs to the GARS family. In the central section; belongs to the AIR synthase family. The protein in the C-terminal section; belongs to the GART family. In terms of assembly, homodimer. Mg(2+) is required as a cofactor. Mn(2+) serves as cofactor. Detected in liver, kidney and brain.

The enzyme catalyses 5-phospho-beta-D-ribosylamine + glycine + ATP = N(1)-(5-phospho-beta-D-ribosyl)glycinamide + ADP + phosphate + H(+). It carries out the reaction 2-formamido-N(1)-(5-O-phospho-beta-D-ribosyl)acetamidine + ATP = 5-amino-1-(5-phospho-beta-D-ribosyl)imidazole + ADP + phosphate + H(+). It catalyses the reaction N(1)-(5-phospho-beta-D-ribosyl)glycinamide + (6R)-10-formyltetrahydrofolate = N(2)-formyl-N(1)-(5-phospho-beta-D-ribosyl)glycinamide + (6S)-5,6,7,8-tetrahydrofolate + H(+). It functions in the pathway purine metabolism; IMP biosynthesis via de novo pathway; 5-amino-1-(5-phospho-D-ribosyl)imidazole from N(2)-formyl-N(1)-(5-phospho-D-ribosyl)glycinamide: step 2/2. Its pathway is purine metabolism; IMP biosynthesis via de novo pathway; N(1)-(5-phospho-D-ribosyl)glycinamide from 5-phospho-alpha-D-ribose 1-diphosphate: step 2/2. The protein operates within purine metabolism; IMP biosynthesis via de novo pathway; N(2)-formyl-N(1)-(5-phospho-D-ribosyl)glycinamide from N(1)-(5-phospho-D-ribosyl)glycinamide (10-formyl THF route): step 1/1. Its function is as follows. Trifunctional enzyme that catalyzes three distinct reactions as part of the 'de novo' inosine monophosphate biosynthetic pathway. In Mus musculus (Mouse), this protein is Trifunctional purine biosynthetic protein adenosine-3 (Gart).